Consider the following 759-residue polypeptide: Glycerol-3-phosphate O-acyltransferase 1 (759 aa).

Residues 1 to 48 (MPAPKLTEKFASSKSTQKTTNYSSIEAKSVKTSADQAYIYQEPSATKK) are Lumenal-facing. The helical transmembrane segment at 49–69 (ILYSIATWLLYNIFHCFFREI) threads the bilayer. The Cytoplasmic portion of the chain corresponds to 70-434 (RGRGSFKVPQ…AKVNFAKNLG (365 aa)). The HXXXXD motif signature appears at 414 to 419 (HYNLPD). The helical transmembrane segment at 435–449 (LVFFRSIGLCILFSL) threads the bilayer. Position 450 (Ala-450) is a topological domain, lumenal. Residues 451-465 (MPGIIMFSPVFILAK) form a helical membrane-spanning segment. Residues 466 to 493 (RISQEKARTALSKSTVKIKANDVIATWK) lie on the Cytoplasmic side of the membrane. The chain crosses the membrane as a helical span at residues 494-514 (ILIGMGFAPLLYIFWSVLITY). The Lumenal segment spans residues 515-523 (YLRHKPWNK). A helical transmembrane segment spans residues 524–544 (IYVFSGSYISCVIVTYSALIV). The Cytoplasmic segment spans residues 545-759 (GDIGMDGFKS…EEEEGKEGDA (215 aa)). Disordered regions lie at residues 613–667 (EEDR…SLVN), 684–705 (RKSESSLASTSVAPSSSSEFEV), and 729–759 (IGENTAREEEEEEEEEEEEEEEEEEGKEGDA). A compositionally biased stretch (basic and acidic residues) spans 647–659 (RDNHDAYEHHNQD). Over residues 688 to 702 (SSLASTSVAPSSSSE) the composition is skewed to low complexity. Acidic residues predominate over residues 736–759 (EEEEEEEEEEEEEEEEEEGKEGDA).

It belongs to the GPAT/DAPAT family.

It is found in the endoplasmic reticulum membrane. It carries out the reaction sn-glycerol 3-phosphate + an acyl-CoA = a 1-acyl-sn-glycero-3-phosphate + CoA. It catalyses the reaction dihydroxyacetone phosphate + an acyl-CoA = a 1-acylglycerone 3-phosphate + CoA. The catalysed reaction is sn-glycerol 3-phosphate + hexadecanoyl-CoA = 1-hexadecanoyl-sn-glycero-3-phosphate + CoA. The enzyme catalyses (9Z)-hexadecenoyl-CoA + sn-glycerol 3-phosphate = 1-(9Z-hexadecenoyl)-sn-glycero-3-phosphate + CoA. It carries out the reaction sn-glycerol 3-phosphate + octadecanoyl-CoA = 1-octadecanoyl-sn-glycero-3-phosphate + CoA. It catalyses the reaction sn-glycerol 3-phosphate + (9Z)-octadecenoyl-CoA = 1-(9Z-octadecenoyl)-sn-glycero-3-phosphate + CoA. It participates in phospholipid metabolism; CDP-diacylglycerol biosynthesis; CDP-diacylglycerol from sn-glycerol 3-phosphate: step 1/3. Functionally, dual substrate-specific glycerol-3-phosphate/dihydroxyacetone phosphate sn-1 acyltransferase, catalyzing the first and committed reaction in the de novo synthesis of glycerophospholipids and triacylglycerols (TAGs). Prefers Gly-3-P over dihydroxyacetone phosphate and has a marked preference for 16-carbon fatty acyl chains. Transfers a fatty acid from fatty acyl-CoA to the sn-1 position of glycerol-3-phosphate to produce lysophosphatidic acid (LysoPA). These lipids not only are precursors of glycerolipids, but also are dynamic components of signal transduction systems that control cell physiology. SCT1 is the primary supplier of diacylglycerols (DAG), used mainly in TAG synthesis and phosphatidylcholine (PC) synthesis through the CDP-choline pathway. Regulates fatty acid desaturation, that is, the ratio of unsaturated versus saturated fatty acyl chains, by competing with the desaturase OLE1 for the common substrate C16:0-CoA. Sequesters C16:0-CoA into lipids, thereby shielding it from desaturation by OLE1. The protein is Glycerol-3-phosphate O-acyltransferase 1 of Saccharomyces cerevisiae (strain ATCC 204508 / S288c) (Baker's yeast).